The chain runs to 171 residues: 3-hydroxydecanoyl-[acyl-carrier-protein] dehydratase (171 aa).

Histidine 71 is an active-site residue.

It belongs to the thioester dehydratase family. FabA subfamily. In terms of assembly, homodimer.

It is found in the cytoplasm. The catalysed reaction is a (3R)-hydroxyacyl-[ACP] = a (2E)-enoyl-[ACP] + H2O. The enzyme catalyses (3R)-hydroxydecanoyl-[ACP] = (2E)-decenoyl-[ACP] + H2O. It carries out the reaction (2E)-decenoyl-[ACP] = (3Z)-decenoyl-[ACP]. Its pathway is lipid metabolism; fatty acid biosynthesis. Its function is as follows. Necessary for the introduction of cis unsaturation into fatty acids. Catalyzes the dehydration of (3R)-3-hydroxydecanoyl-ACP to E-(2)-decenoyl-ACP and then its isomerization to Z-(3)-decenoyl-ACP. Can catalyze the dehydratase reaction for beta-hydroxyacyl-ACPs with saturated chain lengths up to 16:0, being most active on intermediate chain length. The polypeptide is 3-hydroxydecanoyl-[acyl-carrier-protein] dehydratase (Sinorhizobium fredii (strain NBRC 101917 / NGR234)).